Reading from the N-terminus, the 373-residue chain is MPLINLPEFSAELLSEFDARKAERIDTPVIQPAEPFLDIAGEDLRRRIFMTESETGASLCLRPEFTIPVCLRHIETATGTPKRYAYLGEVFRQRRDGANEFYQAGIEDLGDINIPSADARAIGDATGILARLLPGRRLSVTLGDQAVFEAVVQALGLPLGWQKRLIHAFGNMTQLEALLAGLVSPQFVTGLDDDIARLIAAGDEQALIAHIEQEMQATGYSTNASRSPPEIARRLKEKLVLSETRLDDAAFHVLEEFLSLHVPLVNASAALAGFADAAGLKLGNALSRFNGRVGALADAGVDLSCLDYRAAFGRPLDYYTGLVFEVTAEGSSAVLAGGGRFDRLLTFLGATDRIPAVGFSFWLDRIETERAAA.

This sequence belongs to the class-II aminoacyl-tRNA synthetase family. HisZ subfamily. In terms of assembly, heteromultimer composed of HisG and HisZ subunits.

It localises to the cytoplasm. The protein operates within amino-acid biosynthesis; L-histidine biosynthesis; L-histidine from 5-phospho-alpha-D-ribose 1-diphosphate: step 1/9. In terms of biological role, required for the first step of histidine biosynthesis. May allow the feedback regulation of ATP phosphoribosyltransferase activity by histidine. In Rhizobium etli (strain CIAT 652), this protein is ATP phosphoribosyltransferase regulatory subunit.